The chain runs to 231 residues: Dephospho-CoA kinase domain-containing protein (231 aa).

The 205-residue stretch at 3-207 folds into the DPCK domain; the sequence is LVGLTGGIAS…RSLEYLPLRF (205 aa). Residue 8-15 coordinates ATP; that stretch reads GGIASGKS.

Belongs to the CoaE family.

This chain is Dephospho-CoA kinase domain-containing protein (DCAKD), found in Homo sapiens (Human).